Here is a 26-residue protein sequence, read N- to C-terminus: Toxin TdII-1 (26 aa).

The protein belongs to the long (4 C-C) scorpion toxin superfamily. Sodium channel inhibitor family. Beta subfamily. Expressed by the venom gland.

Its subcellular location is the secreted. In terms of biological role, beta toxins bind voltage-independently at site-4 of sodium channels (Nav) and shift the voltage of activation toward more negative potentials thereby affecting sodium channel activation and promoting spontaneous and repetitive firing. This toxin is active against mammals and crustaceans. In Tityus discrepans (Venezuelan scorpion), this protein is Toxin TdII-1.